The sequence spans 314 residues: MLVSGRRRLLTALLQARKWPFQPSRDMRLVQFQAPHLVGPHLGLETGNGGGVINLNAFDPTLPKTMTQFLEQGEATLSVARRALAAQLPVLPRSEVTFLAPVTRPDKVVCVRMNYVDHCKEQNVPVPKEPFIFSKFASSIVGPYDEVVLPPQSQEVDWEVELAVVIGKKGKHIKATDAMAHVAGFTVAHDVSARDWQMRRNGKQWLLGKTFDTFCPLGPALVTKDSVADPHNLKICCRVNGELVQSSNTNQMVFKTEDLIAWVSQFVTFYPGDVILTGTPPGVGVFRKPPVFLKKGDEVQCEIEELGVIINKVV.

A divalent metal cation is bound by residues E159, E161, and D190. K203 carries the post-translational modification N6-acetyllysine; alternate. K203 carries the post-translational modification N6-succinyllysine; alternate. At K234 the chain carries N6-acetyllysine.

Belongs to the FAH family. Ca(2+) is required as a cofactor. Requires Mg(2+) as cofactor.

In terms of biological role, may have hydrolase activity. The polypeptide is Fumarylacetoacetate hydrolase domain-containing protein 2 (FAHD2) (Pongo abelii (Sumatran orangutan)).